Here is a 41-residue protein sequence, read N- to C-terminus: Virescein (41 aa).

The residue at position 41 (His-41) is a Histidine amide.

As to quaternary structure, monomer. As to expression, hemolymph.

The protein localises to the secreted. Functionally, has antibacterial activity against Gram-positive and Gram-negative bacteria. The chain is Virescein from Heliothis virescens (Tobacco budworm moth).